Reading from the N-terminus, the 668-residue chain is Spindle assembly abnormal protein 6 homolog (668 aa).

Positions 39–91 constitute a PISA domain; the sequence is VHKKELVVRLSDDTDPFFLYNLTLGEEDFQSLKNQQGLLVEFSAFPQRFIDLL. The stretch at 182–482 forms a coiled coil; the sequence is LGVTQQALAE…NVIAWLNKQL (301 aa). The disordered stretch occupies residues 623 to 668; sequence GSVPVKGQRNGSSAGTVPVRPALPKSGSSPILSAYFPGQQSRLPAS.

As to quaternary structure, nine homodimers form a cartwheel structure with an internal diameter of 23 nM and radial spokes connecting to the microtubule triplets.

The protein resides in the cytoplasm. The protein localises to the cytoskeleton. It is found in the microtubule organizing center. Its subcellular location is the centrosome. Functionally, central scaffolding component of the centrioles ensuring their 9-fold symmetry. Required for centrosome biogenesis and duplication: required both for mother-centriole-dependent centriole duplication and deuterosome-dependent centriole amplification in multiciliated cells. This chain is Spindle assembly abnormal protein 6 homolog (sas6), found in Xenopus laevis (African clawed frog).